A 470-amino-acid polypeptide reads, in one-letter code: Phosphoribosylamine--glycine ligase (470 aa).

One can recognise an ATP-grasp domain in the interval 115–354 (KDFLKRIGVP…MAEISMAVVE (240 aa)). 142 to 203 (REKFNNGIVV…EERLRGIEVA (62 aa)) is a binding site for ATP. 2 residues coordinate Mg(2+): glutamate 324 and asparagine 326.

Belongs to the GARS family. It depends on Mg(2+) as a cofactor. Mn(2+) serves as cofactor.

It catalyses the reaction 5-phospho-beta-D-ribosylamine + glycine + ATP = N(1)-(5-phospho-beta-D-ribosyl)glycinamide + ADP + phosphate + H(+). The protein operates within purine metabolism; IMP biosynthesis via de novo pathway; N(1)-(5-phospho-D-ribosyl)glycinamide from 5-phospho-alpha-D-ribose 1-diphosphate: step 2/2. The polypeptide is Phosphoribosylamine--glycine ligase (purD) (Archaeoglobus fulgidus (strain ATCC 49558 / DSM 4304 / JCM 9628 / NBRC 100126 / VC-16)).